The sequence spans 247 residues: Probable transcriptional regulatory protein Gura_1416 (247 aa).

The protein belongs to the TACO1 family.

The protein resides in the cytoplasm. In Geotalea uraniireducens (strain Rf4) (Geobacter uraniireducens), this protein is Probable transcriptional regulatory protein Gura_1416.